Consider the following 329-residue polypeptide: Apolipoprotein E (329 aa).

Positions 1 to 18 (MKVLWAALVVALLAGCWA) are cleaved as a signal peptide. 8 repeat units span residues 92-113 (TLME…EQLG), 114-135 (PMAS…ARLR), 136-157 (SDME…AMLG), 158-179 (QSTE…KRVL), 180-201 (RDAE…EGAE), 202-223 (RSVS…TRHA), 224-245 (KVDA…QQLR), and 246-267 (GRLE…EQME). Positions 92 to 267 (TLMEETMKEI…HLDEVREQME (176 aa)) are 8 X 22 AA approximate tandem repeats. Residue Met-155 is modified to Methionine sulfoxide. Ser-159 is subject to Phosphoserine. Residues 170 to 180 (HMRKLRKRVLR) are LDL and other lipoprotein receptors binding. Position 174–177 (174–177 (LRKR)) interacts with heparin. Positions 222–302 (HAKVDALATQ…GWFEPLVEDM (81 aa)) are lipid-binding and lipoprotein association. 241–248 (GQQLRGRL) is a heparin binding site. The interval 278–329 (NQMRQQAEAFQARLKGWFEPLVEDMQRQWAVLVEKVQAAVGTSPTTPPVETK) is homooligomerization. A specificity for association with VLDL region spans residues 290–302 (RLKGWFEPLVEDM).

This sequence belongs to the apolipoprotein A1/A4/E family. In terms of assembly, homotetramer. May interact with ABCA1; functionally associated with ABCA1 in the biogenesis of HDLs. May interact with APP/A4 amyloid-beta peptide; the interaction is extremely stable in vitro but its physiological significance is unclear. May interact with MAPT. May interact with MAP2. In the cerebrospinal fluid, interacts with secreted SORL1. Interacts with PMEL; this allows the loading of PMEL luminal fragment on ILVs to induce fibril nucleation. In terms of processing, APOE exists as multiple glycosylated and sialylated glycoforms within cells and in plasma. The extent of glycosylation and sialylation are tissue and context specific. Glycated in plasma VLDL. Post-translationally, phosphorylated by FAM20C in the extracellular medium.

The protein resides in the secreted. Its subcellular location is the extracellular space. It localises to the extracellular matrix. It is found in the extracellular vesicle. The protein localises to the endosome. The protein resides in the multivesicular body. Functionally, APOE is an apolipoprotein, a protein associating with lipid particles, that mainly functions in lipoprotein-mediated lipid transport between organs via the plasma and interstitial fluids. APOE is a core component of plasma lipoproteins and is involved in their production, conversion and clearance. Apolipoproteins are amphipathic molecules that interact both with lipids of the lipoprotein particle core and the aqueous environment of the plasma. As such, APOE associates with chylomicrons, chylomicron remnants, very low density lipoproteins (VLDL) and intermediate density lipoproteins (IDL) but shows a preferential binding to high-density lipoproteins (HDL). It also binds a wide range of cellular receptors including the LDL receptor/LDLR, the LDL receptor-related proteins LRP1, LRP2 and LRP8 and the very low-density lipoprotein receptor/VLDLR that mediate the cellular uptake of the APOE-containing lipoprotein particles. Finally, APOE also has a heparin-binding activity and binds heparan-sulfate proteoglycans on the surface of cells, a property that supports the capture and the receptor-mediated uptake of APOE-containing lipoproteins by cells. A main function of APOE is to mediate lipoprotein clearance through the uptake of chylomicrons, VLDLs, and HDLs by hepatocytes. APOE is also involved in the biosynthesis by the liver of VLDLs as well as their uptake by peripheral tissues ensuring the delivery of triglycerides and energy storage in muscle, heart and adipose tissues. By participating in the lipoprotein-mediated distribution of lipids among tissues, APOE plays a critical role in plasma and tissues lipid homeostasis. APOE is also involved in two steps of reverse cholesterol transport, the HDLs-mediated transport of cholesterol from peripheral tissues to the liver, and thereby plays an important role in cholesterol homeostasis. First, it is functionally associated with ABCA1 in the biogenesis of HDLs in tissues. Second, it is enriched in circulating HDLs and mediates their uptake by hepatocytes. APOE also plays an important role in lipid transport in the central nervous system, regulating neuron survival and sprouting. In Eumetopias jubatus (Steller sea lion), this protein is Apolipoprotein E (APOE).